The primary structure comprises 559 residues: Potassium-transporting ATPase potassium-binding subunit (559 aa).

The next 13 membrane-spanning stretches (helical) occupy residues Gly-5 to Ser-25, Leu-27 to Trp-47, Leu-63 to Trp-83, Gly-132 to Ile-152, Leu-170 to Ile-190, Leu-253 to Ala-273, Leu-283 to Val-303, Phe-327 to Val-347, Ala-356 to Val-376, Gly-379 to Gly-399, Met-416 to Met-436, Leu-484 to Ala-504, and Gly-524 to Ile-544.

This sequence belongs to the KdpA family. As to quaternary structure, the system is composed of three essential subunits: KdpA, KdpB and KdpC.

It localises to the cell inner membrane. Its function is as follows. Part of the high-affinity ATP-driven potassium transport (or Kdp) system, which catalyzes the hydrolysis of ATP coupled with the electrogenic transport of potassium into the cytoplasm. This subunit binds the periplasmic potassium ions and delivers the ions to the membrane domain of KdpB through an intramembrane tunnel. This Salmonella dublin (strain CT_02021853) protein is Potassium-transporting ATPase potassium-binding subunit.